A 1049-amino-acid polypeptide reads, in one-letter code: Retinoblastoma-like protein 1 (1049 aa).

A phosphothreonine mark is found at Thr332, Thr369, and Thr385. Residues 385–584 (TPVASATQSV…WEALRASANK (200 aa)) form a domain A region. The pocket; binds T and E1A stretch occupies residues 385–944 (TPVASATQSV…GRVKSFALKY (560 aa)). Residues 585-779 (VPSCEEVIFP…TQDAPLTGIS (195 aa)) are spacer. Ser640, Ser650, Ser748, and Ser761 each carry phosphoserine. The segment at 780-944 (KPKRTGSLAL…GRVKSFALKY (165 aa)) is domain B. Phosphoserine occurs at positions 959, 970, and 983. Position 992 is a phosphothreonine (Thr992). A phosphoserine mark is found at Ser1004 and Ser1022.

This sequence belongs to the retinoblastoma protein (RB) family. Component of the DREAM complex (also named LINC complex) at least composed of E2F4, E2F5, LIN9, LIN37, LIN52, LIN54, MYBL1, MYBL2, RBL1, RBL2, RBBP4, TFDP1 and TFDP2. The complex exists in quiescent cells where it represses cell cycle-dependent genes. It dissociates in S phase when LIN9, LIN37, LIN52 and LIN54 form a subcomplex that binds to MYBL2. Interacts with AATF. Interacts with KDM5A. Interacts with KMT5B and KMT5C. Interacts with USP4. Interacts with RBBP9. Post-translationally, cell-cycle arrest properties are inactivated by phosphorylation on Thr-332, Ser-640, Ser-959 and Ser-970 by CDK4.

It localises to the nucleus. Its function is as follows. Key regulator of entry into cell division. Directly involved in heterochromatin formation by maintaining overall chromatin structure and, in particular, that of constitutive heterochromatin by stabilizing histone methylation. Recruits and targets histone methyltransferases KMT5B and KMT5C, leading to epigenetic transcriptional repression. Controls histone H4 'Lys-20' trimethylation. Probably acts as a transcription repressor by recruiting chromatin-modifying enzymes to promoters. Potent inhibitor of E2F-mediated trans-activation. May act as a tumor suppressor. This chain is Retinoblastoma-like protein 1, found in Rattus norvegicus (Rat).